Consider the following 561-residue polypeptide: Methyl-accepting chemotaxis protein CtpM (561 aa).

The Cytoplasmic portion of the chain corresponds to 1 to 11 (MMRLTLKSKVL). A helical membrane pass occupies residues 12–32 (LLAMVPVLLFALVLSGGAVLI). The Periplasmic portion of the chain corresponds to 33 to 205 (LKKQADAEVK…KQDIDERIGT (173 aa)). The chain crosses the membrane as a helical span at residues 206-226 (LIASIVGIAGVLLVVLLVIGL). Topologically, residues 227–561 (AVANAMLRPL…LGRLVGQFRI (335 aa)) are cytoplasmic. An HAMP domain is found at 230-284 (NAMLRPLHQIRQNLDDIAAGEGDLTRRLPVTSYDELGELAGSFNRFVEKIHGLVR). The 237-residue stretch at 289–525 (MTGDLKQLVE…EINRSVHQIA (237 aa)) folds into the Methyl-accepting transducer domain. The interval 333–357 (HEVAQSAQRAAEAAQQTDHEGQAAK) is disordered. Residues 336–348 (AQSAQRAAEAAQQ) show a composition bias toward low complexity.

Belongs to the methyl-accepting chemotaxis (MCP) protein family. As to quaternary structure, homodimer. The ligand-binding domain (LBD) is dimeric in the presence and the absence of ligands.

The protein resides in the cell inner membrane. Functionally, chemotactic-signal transducers respond to changes in the concentration of attractants and repellents in the environment, transduce a signal from the outside to the inside of the cell, and facilitate sensory adaptation through the variation of the level of methylation. Directly recognizes five C4-dicarboxylic acids: L-malic, citramalic, citraconic, bromosuccinic and methylsuccinic acids. Three of the identified ligands act as chemoattractants (L-malic, D,L-bromosuccinic and L-citramalic acids) whereas two of them (L-methylsuccinic and citraconic acids) behave as antagonists by inhibiting the downstream chemotaxis signaling cascade. Antagonists compete with chemoattractants, thereby decreasing the affinity for chemoattractants and the subsequent chemotactic response. Acts through the che chemosensory pathway. The chain is Methyl-accepting chemotaxis protein CtpM from Pseudomonas aeruginosa (strain ATCC 15692 / DSM 22644 / CIP 104116 / JCM 14847 / LMG 12228 / 1C / PRS 101 / PAO1).